The sequence spans 413 residues: Probable Xaa-Pro aminopeptidase UREG_07123 (413 aa).

The Mn(2+) site is built by Asp-194, Asp-205, Glu-340, and Glu-379.

It belongs to the peptidase M24B family. Requires Mn(2+) as cofactor.

The catalysed reaction is Release of any N-terminal amino acid, including proline, that is linked to proline, even from a dipeptide or tripeptide.. Functionally, catalyzes the removal of a penultimate prolyl residue from the N-termini of peptides. The protein is Probable Xaa-Pro aminopeptidase UREG_07123 of Uncinocarpus reesii (strain UAMH 1704).